The sequence spans 103 residues: Large ribosomal subunit protein bL21 (103 aa).

This sequence belongs to the bacterial ribosomal protein bL21 family. Part of the 50S ribosomal subunit. Contacts protein L20.

Functionally, this protein binds to 23S rRNA in the presence of protein L20. This Shewanella sp. (strain ANA-3) protein is Large ribosomal subunit protein bL21.